The primary structure comprises 679 residues: Glycine--tRNA ligase beta subunit (679 aa).

The protein belongs to the class-II aminoacyl-tRNA synthetase family. Tetramer of two alpha and two beta subunits.

The protein resides in the cytoplasm. The enzyme catalyses tRNA(Gly) + glycine + ATP = glycyl-tRNA(Gly) + AMP + diphosphate. This is Glycine--tRNA ligase beta subunit from Streptococcus pyogenes serotype M4 (strain MGAS10750).